Consider the following 442-residue polypeptide: 26S proteasome non-ATPase regulatory subunit 12 homolog A (442 aa).

The stretch at 6–137 forms a coiled coil; it reads KLEATIDRLL…EAADLMQEVA (132 aa). A PCI domain is found at 232-403; sequence EICRSYKAIY…GIVCFQIAKD (172 aa).

It belongs to the proteasome subunit p55 family. In terms of assembly, component of the 19S regulatory particle (RP/PA700) lid subcomplex of the 26S proteasome. The 26S proteasome is composed of a core protease (CP), known as the 20S proteasome, capped at one or both ends by the 19S regulatory particle (RP/PA700). The RP/PA700 complex is composed of at least 17 different subunits in two subcomplexes, the base and the lid, which form the portions proximal and distal to the 20S proteolytic core, respectively. In terms of tissue distribution, ubiquitous with highest expression in flowers.

It is found in the cytoplasm. It localises to the nucleus. Its function is as follows. Acts as a regulatory subunit of the 26 proteasome which is involved in the ATP-dependent degradation of ubiquitinated proteins. Required for gametogenesis and sporophyte development. Acts redundantly with RPN5B. The chain is 26S proteasome non-ATPase regulatory subunit 12 homolog A (RPN5A) from Arabidopsis thaliana (Mouse-ear cress).